The sequence spans 90 residues: Probable Fe(2+)-trafficking protein (90 aa).

The protein belongs to the Fe(2+)-trafficking protein family.

Could be a mediator in iron transactions between iron acquisition and iron-requiring processes, such as synthesis and/or repair of Fe-S clusters in biosynthetic enzymes. The polypeptide is Probable Fe(2+)-trafficking protein (Pseudomonas fluorescens (strain Pf0-1)).